Here is a 369-residue protein sequence, read N- to C-terminus: Proton-coupled zinc antiporter SLC30A8 (369 aa).

Residues 1–79 (MEFLERTYLV…AKWKLCSASA (79 aa)) lie on the Cytoplasmic side of the membrane. Positions 31 to 52 (PVNKDQCPRERPEELESGGMYH) are disordered. Basic and acidic residues predominate over residues 32 to 44 (VNKDQCPRERPEE). Residues His52, Cys53, and His54 each contribute to the Zn(2+) site. Positions 52 to 54 (HCH) match the HCH Motif; seals regulatory zinc-binding pocket motif. The helical transmembrane segment at 80–100 (ICFIFMIAEVVGGHIAGSLAV) threads the bilayer. Residues 101-103 (VTD) are Lumenal, vesicle-facing. Residues 104-124 (AAHLLIDLTSFLLSLFSLWLS) form a helical membrane-spanning segment. His106, Asp110, and His137 together coordinate Zn(2+). Topologically, residues 125–140 (SKPPSKRLTFGWHRAE) are cytoplasmic. The chain crosses the membrane as a helical span at residues 141 to 161 (ILGALLSILCIWVVTGVLVYL). At 162–175 (ACERLLYPDYQIQA) the chain is on the lumenal, vesicle side. Residues 176 to 196 (TVMIIVSSCAVAANIVLTVVL) form a helical membrane-spanning segment. Residues 197–217 (HQRCLGHNHKEVQANASVRAA) lie on the Cytoplasmic side of the membrane. A helical transmembrane segment spans residues 218 to 238 (FVHALGDLFQSISVLISALII). Zn(2+) is bound by residues His220 and Asp224. Topologically, residues 239–245 (YFKPEYK) are lumenal, vesicle. A helical membrane pass occupies residues 246–266 (IADPICTFIFSILVLASTITI). Residues 267 to 369 (LKDFSILLME…DCLFCEDPCD (103 aa)) lie on the Cytoplasmic side of the membrane. 6 residues coordinate Zn(2+): His301, His318, His345, Glu352, Cys361, and Cys364.

It belongs to the cation diffusion facilitator (CDF) transporter (TC 2.A.4) family. SLC30A subfamily. In terms of assembly, homodimer. In terms of tissue distribution, in the endocrine pancreas, expressed in insulin-producing beta cells. Expressed at relatively high levels in subcutaneous fat tissue from lean persons; much lower levels in visceral fat, whether from lean or obese individuals, and in subcutaneous fat tissue from obese individuals. Expressed in peripheral blood mononuclear cells, including T-cells and B-cells, with great variation among individuals ranging from negative to strongly positive.

The protein resides in the cytoplasmic vesicle. It localises to the secretory vesicle membrane. The protein localises to the cell membrane. The enzyme catalyses Zn(2+)(in) + 2 H(+)(out) = Zn(2+)(out) + 2 H(+)(in). Proton-coupled zinc ion antiporter mediating the entry of zinc into the lumen of pancreatic beta cell secretory granules, thereby regulating insulin secretion. This chain is Proton-coupled zinc antiporter SLC30A8, found in Homo sapiens (Human).